Consider the following 576-residue polypeptide: MSLSLGAAIYIALKPIFKIYTIMLVGYLVAKFDIVSMENAKGISNMVVNAILPCLTFNKIVSNISWRDIKEIGVIILSAFILFVLGATGALFTTFATTVPKKFFWGLIFAGFFPNISDLPIAYIQSMGNGSIFTAEEADKGVAYSCIFLFIQSFLMMNFGMWRVVGLDFRDTKEPDSENITPSVSPAIDDRKLTEITKLPNITRPTNAYQSEDARSNSDLSCNSITTNEMTPQAFYEGFTGYIKPYKESNGASHKFESDLPHAEIYRVSSTYSSPGALEFSRIDGSSLSYSRISKNSDGRSYRRKRKADMNELISKYSAAEKIRQGELDLSRPLSLTEEVGSRNASIGNVHTGYTDESSIEEENCTNMATDGRGSLSFFIERHNLKWLQYFIINCLRPASLGAILGIICALIPWVKACFVTTYVHVHKAPDGEPVLNFLMDFTEYIGNACVPLGLLLLGGTLARLEIKSLPPGFIKSALLMTCFRLIVIPIIGVLWVNKLYSIDWLDTGIGKFDMILTWSMPSATAQVYFTAFYTPACGDHIQMNCLSVLFVMQYAILFITVAFVVTYTLKVDLKV.

Residues 1–8 lie on the Cytoplasmic side of the membrane; it reads MSLSLGAA. The helical transmembrane segment at 9 to 29 threads the bilayer; the sequence is IYIALKPIFKIYTIMLVGYLV. The Extracellular portion of the chain corresponds to 30–45; that stretch reads AKFDIVSMENAKGISN. A helical membrane pass occupies residues 46-66; the sequence is MVVNAILPCLTFNKIVSNISW. Residues 67-71 lie on the Cytoplasmic side of the membrane; the sequence is RDIKE. Residues 72-92 traverse the membrane as a helical segment; sequence IGVIILSAFILFVLGATGALF. Residues 93–103 lie on the Extracellular side of the membrane; it reads TTFATTVPKKF. Residues 104-124 traverse the membrane as a helical segment; that stretch reads FWGLIFAGFFPNISDLPIAYI. The Cytoplasmic segment spans residues 125–141; it reads QSMGNGSIFTAEEADKG. A helical transmembrane segment spans residues 142 to 162; it reads VAYSCIFLFIQSFLMMNFGMW. At 163–400 the chain is on the extracellular side; that stretch reads RVVGLDFRDT…FIINCLRPAS (238 aa). The helical transmembrane segment at 401–421 threads the bilayer; sequence LGAILGIICALIPWVKACFVT. Residues 422 to 437 lie on the Cytoplasmic side of the membrane; sequence TYVHVHKAPDGEPVLN. The chain crosses the membrane as a helical span at residues 438-458; that stretch reads FLMDFTEYIGNACVPLGLLLL. Topologically, residues 459-476 are extracellular; the sequence is GGTLARLEIKSLPPGFIK. A helical transmembrane segment spans residues 477–497; it reads SALLMTCFRLIVIPIIGVLWV. Residues 498–512 are Cytoplasmic-facing; that stretch reads NKLYSIDWLDTGIGK. A helical transmembrane segment spans residues 513 to 533; sequence FDMILTWSMPSATAQVYFTAF. The Extracellular segment spans residues 534–545; sequence YTPACGDHIQMN. A helical transmembrane segment spans residues 546-566; the sequence is CLSVLFVMQYAILFITVAFVV. Topologically, residues 567-576 are cytoplasmic; sequence TYTLKVDLKV.

The protein belongs to the auxin efflux carrier (TC 2.A.69) family.

It localises to the membrane. This is an uncharacterized protein from Saccharomyces cerevisiae (strain ATCC 204508 / S288c) (Baker's yeast).